The sequence spans 187 residues: Small ribosomal subunit protein uS7 (187 aa).

The protein belongs to the universal ribosomal protein uS7 family. Part of the 30S ribosomal subunit.

Its function is as follows. One of the primary rRNA binding proteins, it binds directly to 16S rRNA where it nucleates assembly of the head domain of the 30S subunit. Is located at the subunit interface close to the decoding center. The polypeptide is Small ribosomal subunit protein uS7 (Methanosphaera stadtmanae (strain ATCC 43021 / DSM 3091 / JCM 11832 / MCB-3)).